A 148-amino-acid polypeptide reads, in one-letter code: Small ribosomal subunit protein uS7c (148 aa).

Belongs to the universal ribosomal protein uS7 family. Part of the 30S ribosomal subunit.

Its subcellular location is the plastid. It localises to the chloroplast. Functionally, one of the primary rRNA binding proteins, it binds directly to 16S rRNA where it nucleates assembly of the head domain of the 30S subunit. The chain is Small ribosomal subunit protein uS7c (rps7) from Cyanidioschyzon merolae (strain NIES-3377 / 10D) (Unicellular red alga).